A 144-amino-acid chain; its full sequence is Large ribosomal subunit protein uL15 (144 aa).

The segment at 1-51 (MKLNELKPATGSRSKRLRKGRGLSSGHGFTSGRGTKGQKAHGKTRLGFEGG) is disordered. The segment covering 23–35 (LSSGHGFTSGRGT) has biased composition (gly residues).

It belongs to the universal ribosomal protein uL15 family. In terms of assembly, part of the 50S ribosomal subunit.

In terms of biological role, binds to the 23S rRNA. This Limosilactobacillus reuteri (strain DSM 20016) (Lactobacillus reuteri) protein is Large ribosomal subunit protein uL15.